Consider the following 473-residue polypeptide: Crt homolog 1 (473 aa).

Residues Met-1–Thr-49 are Cytoplasmic-facing. A helical transmembrane segment spans residues Ile-50–Leu-70. At Lys-71–Tyr-80 the chain is on the vacuolar side. Residues Ala-81–Ala-101 traverse the membrane as a helical segment. Residues Tyr-102–Lys-121 lie on the Cytoplasmic side of the membrane. Residues Phe-122–Ser-142 traverse the membrane as a helical segment. The Vacuolar segment spans residues Thr-143–Pro-146. A helical membrane pass occupies residues Leu-147–Leu-167. Over Lys-168–Gln-175 the chain is Cytoplasmic. A helical membrane pass occupies residues Leu-176 to Gly-196. Over Gly-197–Asn-207 the chain is Vacuolar. Residues Phe-208–Phe-228 form a helical membrane-spanning segment. At Gln-229–Ser-248 the chain is on the cytoplasmic side. A helical transmembrane segment spans residues Ile-249–Phe-269. Residues Glu-270 to Trp-322 are Vacuolar-facing. N-linked (GlcNAc...) asparagine glycosylation occurs at Asn-295. A helical membrane pass occupies residues Ile-323 to Leu-343. Topologically, residues Lys-344–Ser-352 are cytoplasmic. Residues Ile-353 to Gly-373 traverse the membrane as a helical segment. A topological domain (vacuolar) is located at residue Ser-374. Residues Ala-375–Gly-395 traverse the membrane as a helical segment. Over Gly-396–Ala-473 the chain is Cytoplasmic.

The protein belongs to the CRT-like transporter family.

The protein resides in the vacuole membrane. In terms of biological role, nutrient transporter. Involved in maintaining the osmotic homeostasis of the digestive vacuole. The chain is Crt homolog 1 (crtp1) from Dictyostelium discoideum (Social amoeba).